A 254-amino-acid chain; its full sequence is 5-oxoprolinase subunit A (254 aa).

Belongs to the LamB/PxpA family. Forms a complex composed of PxpA, PxpB and PxpC.

It carries out the reaction 5-oxo-L-proline + ATP + 2 H2O = L-glutamate + ADP + phosphate + H(+). Catalyzes the cleavage of 5-oxoproline to form L-glutamate coupled to the hydrolysis of ATP to ADP and inorganic phosphate. The chain is 5-oxoprolinase subunit A from Burkholderia mallei (strain NCTC 10247).